The primary structure comprises 522 residues: 2-isopropylmalate synthase (522 aa).

Residues 5 to 267 (VIIFDTTLRD…YTNINAREIH (263 aa)) enclose the Pyruvate carboxyltransferase domain. Residues Asp-14, His-202, His-204, and Asn-238 each contribute to the Mn(2+) site. The tract at residues 392–522 (VMEQLVVQSD…MQQTRELGGV (131 aa)) is regulatory domain.

Belongs to the alpha-IPM synthase/homocitrate synthase family. LeuA type 1 subfamily. In terms of assembly, homodimer. The cofactor is Mn(2+).

It is found in the cytoplasm. It carries out the reaction 3-methyl-2-oxobutanoate + acetyl-CoA + H2O = (2S)-2-isopropylmalate + CoA + H(+). Its pathway is amino-acid biosynthesis; L-leucine biosynthesis; L-leucine from 3-methyl-2-oxobutanoate: step 1/4. Functionally, catalyzes the condensation of the acetyl group of acetyl-CoA with 3-methyl-2-oxobutanoate (2-ketoisovalerate) to form 3-carboxy-3-hydroxy-4-methylpentanoate (2-isopropylmalate). The sequence is that of 2-isopropylmalate synthase from Shewanella amazonensis (strain ATCC BAA-1098 / SB2B).